A 130-amino-acid polypeptide reads, in one-letter code: Small ribosomal subunit protein uS11 (130 aa).

This sequence belongs to the universal ribosomal protein uS11 family. Part of the 30S ribosomal subunit. Interacts with proteins S7 and S18. Binds to IF-3.

In terms of biological role, located on the platform of the 30S subunit, it bridges several disparate RNA helices of the 16S rRNA. Forms part of the Shine-Dalgarno cleft in the 70S ribosome. This Moorella thermoacetica (strain ATCC 39073 / JCM 9320) protein is Small ribosomal subunit protein uS11.